Here is a 755-residue protein sequence, read N- to C-terminus: Dynamin-1-like protein (755 aa).

An N-acetylmethionine modification is found at methionine 1. Positions 22–315 (IIQLPQIVVV…LMHHIRDCLP (294 aa)) constitute a Dynamin-type G domain. The interval 32–39 (GTQSSGKS) is G1 motif. GTP is bound at residue 32–40 (GTQSSGKSS). The G2 motif stretch occupies residues 58–60 (VTR). A G3 motif region spans residues 159–162 (DLPG). Residues 228 to 231 (TKLD) form a G4 motif region. Residues 228–234 (TKLDLMD) and 259–262 (NRSQ) contribute to the GTP site. Positions 258–261 (VNRS) are G5 motif. The middle domain stretch occupies residues 357 to 502 (YCNTIEGTAK…NEMVHNLVAI (146 aa)). The interaction with GSK3B stretch occupies residues 461–704 (NYSTQELLRF…NHVKDTLQSE (244 aa)). The b domain stretch occupies residues 515–582 (ADACGLMNNN…IQDNRRETKN (68 aa)). The tract at residues 536–610 (ELPSAVSRDK…QEPTTGNWRG (75 aa)) is disordered. Serine 542 is subject to Phosphoserine. Residues lysine 545 and lysine 548 each participate in a glycyl lysine isopeptide (Lys-Gly) (interchain with G-Cter in SUMO) cross-link. Over residues 550 to 567 (PSALAPASQEPSPAASAE) the composition is skewed to low complexity. Serine 561 carries the post-translational modification Phosphoserine. The span at 568–581 (ADGKLIQDNRRETK) shows a compositional bias: basic and acidic residues. Glycyl lysine isopeptide (Lys-Gly) (interchain with G-Cter in SUMO) cross-links involve residues lysine 571 and lysine 581. The span at 586-600 (AGGGIGDGGRIGDGG) shows a compositional bias: gly residues. O-linked (GlcNAc) threonine glycosylation is found at threonine 604 and threonine 605. Lysine 613 participates in a covalent cross-link: Glycyl lysine isopeptide (Lys-Gly) (interchain with G-Cter in SUMO). Lysine 616 is subject to N6-acetyllysine; alternate. Lysine 616 is covalently cross-linked (Glycyl lysine isopeptide (Lys-Gly) (interchain with G-Cter in SUMO); alternate). A Glycyl lysine isopeptide (Lys-Gly) (interchain with G-Cter in SUMO) cross-link involves residue lysine 625. Serine 626 carries the post-translational modification Phosphoserine. A Glycyl lysine isopeptide (Lys-Gly) (interchain with G-Cter in SUMO) cross-link involves residue lysine 627. Serine 635 is modified (phosphoserine; by CDK1). Position 656 is a phosphoserine; by CAMK1 and PKA (serine 656). Cysteine 663 bears the S-nitrosocysteine mark. One can recognise a GED domain in the interval 663-754 (CEVIERLIKS…IIAEIRETHL (92 aa)). Residues 673–687 (YFLIVRKNIQDSVPK) form an important for homodimerization region.

It belongs to the TRAFAC class dynamin-like GTPase superfamily. Dynamin/Fzo/YdjA family. Homotetramer; dimerizes through the N-terminal GTP-middle region of one molecule binding to the GED domain of another DNM1L molecule. Oligomerizes in a GTP-dependent manner to form membrane-associated tubules with a spiral pattern. Interacts with GSK3B and MARCHF5. Interacts (via the GTPase and B domains) with UBE2I; the interaction promotes sumoylation of DNM1L, mainly in its B domain. Interacts with PPP3CA; the interaction dephosphorylates DNM1L and regulates its transition to mitochondria. Interacts with BCL2L1 isoform BCL-X(L) and CLTA; DNM1L and BCL2L1 isoform BCL-X(L) may form a complex in synaptic vesicles that also contains clathrin and MFF. Interacts with MFF; the interaction is inhinited by C11orf65/MFI. Interacts with FIS1. Interacts with MIEF2 and MIEF1; GTP-dependent this regulates GTP hydrolysis and DNM1L oligomerization. Interacts with PGAM5; this interaction leads to dephosphorylation at Ser-656 and activation of GTPase activity and eventually to mitochondria fragmentation. Interacts with RALBP1; during mitosis, recruits DNM1L to the mitochondrion and mediates its activation by the mitotic kinase cyclin B-CDK1. Interacts with FUNDC1; this interaction recruits DNM1L/DRP1 at ER-mitochondria contact sites. In terms of processing, phosphorylation/dephosphorylation events on two sites near the GED domain regulate mitochondrial fission. Phosphorylation on Ser-656 by CAMK1 and PKA inhibits the GTPase activity, leading to a defect in mitochondrial fission promoting mitochondrial elongation. Dephosphorylated on this site by PPP3CA which promotes mitochondrial fission. Phosphorylation on Ser-635 by PINK1 activates the GTPase activity and promotes mitochondrial fission. Phosphorylation on Ser-635 by CDK1 also promotes mitochondrial fission. Phosphorylated in a circadian manner at Ser-656. Dephosphorylated by PGAM5. Sumoylated on various lysine residues within the B domain, probably by MUL1. Sumoylation positively regulates mitochondrial fission. Desumoylated by SENP5 during G2/M transition of mitosis. Appears to be linked to its catalytic activity. Post-translationally, S-nitrosylation increases DNM1L dimerization, mitochondrial fission and causes neuronal damage. In terms of processing, O-GlcNAcylation augments the level of the GTP-bound active form of DNM1L and induces translocation from the cytoplasm to mitochondria in cardiomyocytes. It also decreases phosphorylation at Ser-656. Ubiquitination by MARCHF5 affects mitochondrial morphology. In terms of tissue distribution, expressed in all tissues tested (at protein level). Longer isoforms are preferentially expressed in brain.

It is found in the cytoplasm. The protein localises to the cytosol. It localises to the golgi apparatus. The protein resides in the endomembrane system. Its subcellular location is the mitochondrion outer membrane. It is found in the peroxisome. The protein localises to the membrane. It localises to the clathrin-coated pit. The protein resides in the cytoplasmic vesicle. Its subcellular location is the secretory vesicle. It is found in the synaptic vesicle membrane. It carries out the reaction GTP + H2O = GDP + phosphate + H(+). Functionally, functions in mitochondrial and peroxisomal division. Mediates membrane fission through oligomerization into membrane-associated tubular structures that wrap around the scission site to constrict and sever the mitochondrial membrane through a GTP hydrolysis-dependent mechanism. The specific recruitment at scission sites is mediated by membrane receptors like MFF, MIEF1 and MIEF2 for mitochondrial membranes. While the recruitment by the membrane receptors is GTP-dependent, the following hydrolysis of GTP induces the dissociation from the receptors and allows DNM1L filaments to curl into closed rings that are probably sufficient to sever a double membrane. Acts downstream of PINK1 to promote mitochondrial fission in a PRKN-dependent manner. Plays an important role in mitochondrial fission during mitosis. Through its function in mitochondrial division, ensures the survival of at least some types of postmitotic neurons, including Purkinje cells, by suppressing oxidative damage. Required for normal brain development, including that of cerebellum. Facilitates developmentally regulated apoptosis during neural tube formation. Required for a normal rate of cytochrome c release and caspase activation during apoptosis; this requirement may depend upon the cell type and the physiological apoptotic cues. Required for formation of endocytic vesicles. Proposed to regulate synaptic vesicle membrane dynamics through association with BCL2L1 isoform Bcl-X(L) which stimulates its GTPase activity in synaptic vesicles; the function may require its recruitment by MFF to clathrin-containing vesicles. Required for programmed necrosis execution. Rhythmic control of its activity following phosphorylation at Ser-656 is essential for the circadian control of mitochondrial ATP production. The chain is Dynamin-1-like protein from Rattus norvegicus (Rat).